Reading from the N-terminus, the 344-residue chain is Dihydroorotase (344 aa).

Positions 14 and 16 each coordinate Zn(2+). Substrate contacts are provided by residues 16–18 (HVR) and Asn-42. Residues Lys-99, His-136, and His-174 each coordinate Zn(2+). At Lys-99 the chain carries N6-carboxylysine. His-136 provides a ligand contact to substrate. Leu-219 lines the substrate pocket. Asp-247 provides a ligand contact to Zn(2+). Residue Asp-247 is part of the active site. Substrate contacts are provided by His-251 and Ala-263.

This sequence belongs to the metallo-dependent hydrolases superfamily. DHOase family. Class II DHOase subfamily. In terms of assembly, homodimer. Requires Zn(2+) as cofactor.

The catalysed reaction is (S)-dihydroorotate + H2O = N-carbamoyl-L-aspartate + H(+). It functions in the pathway pyrimidine metabolism; UMP biosynthesis via de novo pathway; (S)-dihydroorotate from bicarbonate: step 3/3. In terms of biological role, catalyzes the reversible cyclization of carbamoyl aspartate to dihydroorotate. This is Dihydroorotase from Leptothrix cholodnii (strain ATCC 51168 / LMG 8142 / SP-6) (Leptothrix discophora (strain SP-6)).